A 233-amino-acid chain; its full sequence is C-type lectin domain family 2 member D2 (233 aa).

Residues 1–34 (MPSSAHLQDAPPLLSRTLTQDEEQTSLRQSSSCG) are disordered. Residues 1–76 (MPSSAHLQDA…SPESPAKLPC (76 aa)) lie on the Cytoplasmic side of the membrane. Residues 77–97 (CYGVIMVLSVAVVALSVALSV) traverse the membrane as a helical; Signal-anchor for type II membrane protein segment. The Extracellular portion of the chain corresponds to 98–233 (KKTPQILTVK…KPNSYTSQCQ (136 aa)). Residues 119–228 (VGNKCYYFNE…KSICSKPNSY (110 aa)) enclose the C-type lectin domain. N-linked (GlcNAc...) asparagine glycosylation is present at N132.

The protein resides in the cell membrane. Functionally, lectin-type cell surface receptor. The protein is C-type lectin domain family 2 member D2 (Clec2d2) of Rattus norvegicus (Rat).